The sequence spans 693 residues: Phosphoribosylformylglycinamidine synthase subunit PurL (693 aa).

H34 is an active-site residue. Residues Y37 and K76 each coordinate ATP. Mg(2+) is bound at residue E78. Substrate contacts are provided by residues 79–82 (SHNH) and R101. The active-site Proton acceptor is H80. D102 lines the Mg(2+) pocket. A substrate-binding site is contributed by Q222. Residue D248 participates in Mg(2+) binding. 292–294 (ETQ) provides a ligand contact to substrate. The ATP site is built by D470 and G507. Substrate is bound at residue S510.

This sequence belongs to the FGAMS family. In terms of assembly, monomer. Part of the FGAM synthase complex composed of 1 PurL, 1 PurQ and 2 PurS subunits.

It is found in the cytoplasm. The catalysed reaction is N(2)-formyl-N(1)-(5-phospho-beta-D-ribosyl)glycinamide + L-glutamine + ATP + H2O = 2-formamido-N(1)-(5-O-phospho-beta-D-ribosyl)acetamidine + L-glutamate + ADP + phosphate + H(+). The protein operates within purine metabolism; IMP biosynthesis via de novo pathway; 5-amino-1-(5-phospho-D-ribosyl)imidazole from N(2)-formyl-N(1)-(5-phospho-D-ribosyl)glycinamide: step 1/2. Its function is as follows. Part of the phosphoribosylformylglycinamidine synthase complex involved in the purines biosynthetic pathway. Catalyzes the ATP-dependent conversion of formylglycinamide ribonucleotide (FGAR) and glutamine to yield formylglycinamidine ribonucleotide (FGAM) and glutamate. The FGAM synthase complex is composed of three subunits. PurQ produces an ammonia molecule by converting glutamine to glutamate. PurL transfers the ammonia molecule to FGAR to form FGAM in an ATP-dependent manner. PurS interacts with PurQ and PurL and is thought to assist in the transfer of the ammonia molecule from PurQ to PurL. The sequence is that of Phosphoribosylformylglycinamidine synthase subunit PurL from Pyrobaculum islandicum (strain DSM 4184 / JCM 9189 / GEO3).